Consider the following 116-residue polypeptide: Large ribosomal subunit protein bL19 (116 aa).

It belongs to the bacterial ribosomal protein bL19 family.

Its function is as follows. This protein is located at the 30S-50S ribosomal subunit interface and may play a role in the structure and function of the aminoacyl-tRNA binding site. The chain is Large ribosomal subunit protein bL19 from Shewanella loihica (strain ATCC BAA-1088 / PV-4).